The sequence spans 595 residues: Phytoene desaturase (595 aa).

The N-terminal stretch at 1–23 is a signal peptide; it reads MAETQRPRSAIIVGAGAGGIAVA. Residues 574-594 form a helical membrane-spanning segment; sequence SQRAFPLLVALMGVLYFLLFV.

Belongs to the carotenoid/retinoid oxidoreductase family. The cofactor is NAD(+).

Its subcellular location is the membrane. It carries out the reaction 15-cis-phytoene + A = all-trans-phytofluene + AH2. The enzyme catalyses all-trans-phytofluene + A = all-trans-zeta-carotene + AH2. The catalysed reaction is all-trans-zeta-carotene + A = all-trans-neurosporene + AH2. It catalyses the reaction all-trans-neurosporene + A = all-trans-lycopene + AH2. It carries out the reaction all-trans-lycopene + A = all-trans-3,4-didehydrolycopene + AH2. The protein operates within carotenoid biosynthesis; lycopene biosynthesis. Functionally, phytoene desaturase involved in the carotenoid biosynthesis pathway. Converts phytoene into 3,4-didehydrolycopene via the intermediates phytofluene, zeta-carotene, neurosporene and lycopene, by introducing up to five double bonds into phytoene. Is also able to desaturate 1-hydroxyneurosporene into 1-hydroxylycopene and 1-hydroxylycopene into 1-hydroxy-3,4-didehydrolycopene. Gamma-carotene and 1,19-dihydroxylycopene are not accepted as substrates. Neurosporaxanthin is synthesized from geranyl-geranyl pyrophosphate (GGPP) through several enzymatic activities. Phytoene synthase activity performed by the bifunctional enzyme al-2 first produces phytoene from geranyl-geranyl pyrophosphate (GGPP). The phytoene dehydrogenase al-1 then introduces 5 desaturations to lead to 3,4-didehydrolycopene via the intermediates phytofluene, zeta-carotene, neurosporene and lycopene. Al-2 cyclase activity then converts 3,4-didehydrolycopene into torulene. Al-2 can also convet lycopene into gamma-carotene which in turn is converted to beta-carotene by an additional al-2 cyclization reaction. Torulene is the substrate of the dioxidase cao-2 that breaks the molecule, removing five carbon atoms to yield beta-apo-4'-carotenal, whereas the aldehyde dehydrogenase ylo-1 mediates the last step by converting beta-apo-4'-carotenal into neurosporaxanthin. The chain is Phytoene desaturase from Neurospora crassa (strain ATCC 24698 / 74-OR23-1A / CBS 708.71 / DSM 1257 / FGSC 987).